The chain runs to 395 residues: Cyclic AMP-responsive element-binding protein 3-like protein 4 (395 aa).

At 1–295 (MDLGIPDLLD…QTSNKAAQTS (295 aa)) the chain is on the cytoplasmic side. The segment at 82–108 (EASPGSDSGISEDPCHPDSPPAPRATS) is disordered. A bZIP domain is found at 217–280 (VLKKVRRKIR…ISLVAQLRQL (64 aa)). The interval 219 to 248 (KKVRRKIRNKQSAQDSRRRKKEYIDGLESR) is basic motif. Positions 259–280 (LQKKVQELERHNISLVAQLRQL) are leucine-zipper. Residues 296–316 (TCVLILLFSLALIILPSFSPF) traverse the membrane as a helical; Signal-anchor for type II membrane protein segment. Residues 317-395 (QSRPEAGSED…IRSVLHADEM (79 aa)) are Lumenal-facing. The tract at residues 355–395 (RLREPPGAKDANGSTRTLLEKMGGKPRPSGRIRSVLHADEM) is disordered. N-linked (GlcNAc...) asparagine glycosylation occurs at asparagine 366.

The protein belongs to the bZIP family. ATF subfamily. As to quaternary structure, binds DNA as a dimer. N-glycosylated in the C-terminal region. Post-translationally, controlled by regulated intramembrane proteolysis (RIP). Following ER stress a fragment containing the cytoplasmic transcription factor domain is released by proteolysis. The cleavage seems to be performed sequentially by site-1 and site-2 proteases (PS1 and PS2). PS1 cleavage may be suppressed by a determinant in the C-terminal region. In terms of tissue distribution, according to PubMed:11830526, exclusively expressed in the prostate. Expressed in breast and prostate cancer cell lines. Expressed in prostatic luminal epithelial cells (at protein level). Expression is significantly more abundant in prostate cancer than in benign prostatic tissue (prostatic hyperplasia). According to PubMed:12111373, also expressed in brain, pancreas and skeletal muscle, and at lower levels in small intestine, testis, leukocyte and thymus.

Its subcellular location is the endoplasmic reticulum membrane. It is found in the golgi apparatus membrane. The protein localises to the nucleus. Its function is as follows. Transcriptional activator that may play a role in the unfolded protein response. Binds to the UPR element (UPRE) but not to CRE element. Preferentially binds DNA with to the consensus sequence 5'-T[GT]ACGT[GA][GT]-3' and has transcriptional activation activity from UPRE. Binds to NF-kappa-B site and has transcriptional activation activity from NF-kappa-B-containing regulatory elements. This Homo sapiens (Human) protein is Cyclic AMP-responsive element-binding protein 3-like protein 4 (CREB3L4).